The chain runs to 275 residues: 3',5'-cyclic adenosine monophosphate phosphodiesterase CpdA (275 aa).

7 residues coordinate Fe cation: Asp22, His24, Asp64, Asn94, His164, His203, and His205. Residues His24, Asp64, and 94–95 (NH) contribute to the AMP site. His205 serves as a coordination point for AMP.

This sequence belongs to the cyclic nucleotide phosphodiesterase class-III family. Fe(2+) serves as cofactor.

The catalysed reaction is 3',5'-cyclic AMP + H2O = AMP + H(+). Functionally, hydrolyzes cAMP to 5'-AMP. Plays an important regulatory role in modulating the intracellular concentration of cAMP, thereby influencing cAMP-dependent processes. In Escherichia coli O157:H7, this protein is 3',5'-cyclic adenosine monophosphate phosphodiesterase CpdA.